We begin with the raw amino-acid sequence, 145 residues long: 3-dehydroquinate dehydratase (145 aa).

Tyr23 (proton acceptor) is an active-site residue. Substrate contacts are provided by Asn75, His81, and Asp88. His101 functions as the Proton donor in the catalytic mechanism. Substrate-binding positions include 102-103 (LS) and Arg112.

Belongs to the type-II 3-dehydroquinase family. Homododecamer.

It catalyses the reaction 3-dehydroquinate = 3-dehydroshikimate + H2O. It functions in the pathway metabolic intermediate biosynthesis; chorismate biosynthesis; chorismate from D-erythrose 4-phosphate and phosphoenolpyruvate: step 3/7. Catalyzes a trans-dehydration via an enolate intermediate. The polypeptide is 3-dehydroquinate dehydratase (Legionella pneumophila (strain Paris)).